We begin with the raw amino-acid sequence, 175 residues long: NADH-ubiquinone oxidoreductase chain 6 (175 aa).

Helical transmembrane passes span 1–21 (MMYI…GFSS), 25–45 (PVYG…IIMG), 51–71 (LGLV…GYTI), 87–107 (VVLG…MWLF), 112–132 (ELVG…EGGF), and 148–168 (YGFW…FIAI).

It belongs to the complex I subunit 6 family. In terms of assembly, core subunit of respiratory chain NADH dehydrogenase (Complex I) which is composed of 45 different subunits.

The protein localises to the mitochondrion inner membrane. The enzyme catalyses a ubiquinone + NADH + 5 H(+)(in) = a ubiquinol + NAD(+) + 4 H(+)(out). In terms of biological role, core subunit of the mitochondrial membrane respiratory chain NADH dehydrogenase (Complex I) which catalyzes electron transfer from NADH through the respiratory chain, using ubiquinone as an electron acceptor. Essential for the catalytic activity and assembly of complex I. The sequence is that of NADH-ubiquinone oxidoreductase chain 6 (MT-ND6) from Loxodonta africana (African elephant).